A 310-amino-acid chain; its full sequence is MNLQDDQTSADLFQVATFYSFTAWTEVTIACLLHDLLSLGDEHQLMGTVLLAEEGVNGTICGSVDGVSALLERLESDLIEGLFELKISWTPEQAFRRFKVRRKAEIVTMGLAGLNPSKTVGTYVDAHEWNDLIDDPDTLLIDTRNDYEVAIGEFKGAINPQTKCFRDFPAWVEQQLRSMVKAQTPARIAMYCTGGIRCEKATSYLIEKGFTNVHHLRGGILRYFEEVSQTESRWQGECFVFDQRVALNHQLSPGVHCLCHACGMPLTPEDQTMNSYLPGVQCRHCVDQFSDTDRIRFAERQRQMEHSSRK.

The 99-residue stretch at 134–232 folds into the Rhodanese domain; the sequence is DDPDTLLIDT…YFEEVSQTES (99 aa). Residue C192 is the Cysteine persulfide intermediate of the active site.

Belongs to the TrhO family.

It catalyses the reaction uridine(34) in tRNA + AH2 + O2 = 5-hydroxyuridine(34) in tRNA + A + H2O. Functionally, catalyzes oxygen-dependent 5-hydroxyuridine (ho5U) modification at position 34 in tRNAs. The sequence is that of tRNA uridine(34) hydroxylase from Prochlorococcus marinus (strain MIT 9313).